The following is a 488-amino-acid chain: GTPase Der (488 aa).

EngA-type G domains lie at proline 3–methionine 166 and isoleucine 199–threonine 372. Residues glycine 9–serine 16, aspartate 56–isoleucine 60, asparagine 118–aspartate 121, glycine 205–serine 212, aspartate 252–valine 256, and asparagine 317–aspartate 320 contribute to the GTP site. One can recognise a KH-like domain in the interval arginine 373–aspartate 457. Positions phenylalanine 460–lysine 488 are disordered. The span at arginine 473–lysine 488 shows a compositional bias: basic residues.

The protein belongs to the TRAFAC class TrmE-Era-EngA-EngB-Septin-like GTPase superfamily. EngA (Der) GTPase family. In terms of assembly, associates with the 50S ribosomal subunit.

Its function is as follows. GTPase that plays an essential role in the late steps of ribosome biogenesis. This Shewanella baltica (strain OS155 / ATCC BAA-1091) protein is GTPase Der.